A 179-amino-acid polypeptide reads, in one-letter code: Large ribosomal subunit protein uL5 (179 aa).

This sequence belongs to the universal ribosomal protein uL5 family. In terms of assembly, part of the 50S ribosomal subunit; part of the 5S rRNA/L5/L18/L25 subcomplex. Contacts the 5S rRNA and the P site tRNA. Forms a bridge to the 30S subunit in the 70S ribosome.

In terms of biological role, this is one of the proteins that bind and probably mediate the attachment of the 5S RNA into the large ribosomal subunit, where it forms part of the central protuberance. In the 70S ribosome it contacts protein S13 of the 30S subunit (bridge B1b), connecting the 2 subunits; this bridge is implicated in subunit movement. Contacts the P site tRNA; the 5S rRNA and some of its associated proteins might help stabilize positioning of ribosome-bound tRNAs. The chain is Large ribosomal subunit protein uL5 from Shewanella woodyi (strain ATCC 51908 / MS32).